Reading from the N-terminus, the 73-residue chain is DNA-directed RNA polymerase subunit omega (73 aa).

The protein belongs to the RNA polymerase subunit omega family. In terms of assembly, the RNAP catalytic core consists of 2 alpha, 1 beta, 1 beta' and 1 omega subunit. When a sigma factor is associated with the core the holoenzyme is formed, which can initiate transcription.

It catalyses the reaction RNA(n) + a ribonucleoside 5'-triphosphate = RNA(n+1) + diphosphate. In terms of biological role, promotes RNA polymerase assembly. Latches the N- and C-terminal regions of the beta' subunit thereby facilitating its interaction with the beta and alpha subunits. This chain is DNA-directed RNA polymerase subunit omega, found in Clostridium novyi (strain NT).